The chain runs to 405 residues: Arginine deiminase (405 aa).

The Amidino-cysteine intermediate role is filled by Cys395.

Belongs to the arginine deiminase family.

Its subcellular location is the cytoplasm. The catalysed reaction is L-arginine + H2O = L-citrulline + NH4(+). It participates in amino-acid degradation; L-arginine degradation via ADI pathway; carbamoyl phosphate from L-arginine: step 1/2. The protein is Arginine deiminase of Rhodococcus erythropolis (strain PR4 / NBRC 100887).